We begin with the raw amino-acid sequence, 234 residues long: Ribitol-5-phosphate cytidylyltransferase (234 aa).

Residues 7–10 (LAGG) and 79–85 (GSIVQKS) each bind CTP.

The protein belongs to the IspD/TarI cytidylyltransferase family. TarI subfamily.

It carries out the reaction D-ribitol 5-phosphate + CTP + H(+) = CDP-L-ribitol + diphosphate. Its pathway is cell wall biogenesis; poly(ribitol phosphate) teichoic acid biosynthesis. Its function is as follows. Catalyzes the transfer of the cytidylyl group of CTP to D-ribitol 5-phosphate. This is Ribitol-5-phosphate cytidylyltransferase from Lacticaseibacillus paracasei (strain ATCC 334 / BCRC 17002 / CCUG 31169 / CIP 107868 / KCTC 3260 / NRRL B-441) (Lactobacillus paracasei).